We begin with the raw amino-acid sequence, 318 residues long: Dimethyladenosine transferase (318 aa).

Residues histidine 37, leucine 39, glycine 64, glutamate 85, aspartate 113, and asparagine 128 each contribute to the S-adenosyl-L-methionine site.

This sequence belongs to the class I-like SAM-binding methyltransferase superfamily. rRNA adenine N(6)-methyltransferase family.

The protein resides in the cytoplasm. The protein localises to the nucleus. Its subcellular location is the nucleolus. The catalysed reaction is adenosine(1779)/adenosine(1780) in 18S rRNA + 4 S-adenosyl-L-methionine = N(6)-dimethyladenosine(1779)/N(6)-dimethyladenosine(1780) in 18S rRNA + 4 S-adenosyl-L-homocysteine + 4 H(+). In terms of biological role, specifically dimethylates two adjacent adenosines in the loop of a conserved hairpin near the 3'-end of 18S rRNA in the 40S particle. In Saccharomyces cerevisiae (strain ATCC 204508 / S288c) (Baker's yeast), this protein is Dimethyladenosine transferase.